Consider the following 249-residue polypeptide: Triosephosphate isomerase (249 aa).

Residues N12 and K14 each coordinate substrate. K14 carries the N6-acetyllysine modification. At Y68 the chain carries 3'-nitrotyrosine. S80 and S106 each carry phosphoserine. Residue K142 forms a Glycyl lysine isopeptide (Lys-Gly) (interchain with G-Cter in SUMO1) linkage. K149 carries the N6-succinyllysine modification. Position 156 is an N6-acetyllysine; alternate (K156). An N6-succinyllysine; alternate modification is found at K156. Phosphoserine is present on S159. E166 serves as the catalytic Proton acceptor. T173 is modified (phosphothreonine). Position 194 is an N6-acetyllysine; alternate (K194). K194 carries the N6-succinyllysine; alternate modification. K194 is modified (N6-methyllysine; alternate). At S198 the chain carries Phosphoserine. Y209 carries the 3'-nitrotyrosine modification. The residue at position 212 (S212) is a Phosphoserine. Position 214 is a phosphothreonine (T214). S223 carries the phosphoserine modification. At K238 the chain carries N6-acetyllysine.

This sequence belongs to the triosephosphate isomerase family. As to quaternary structure, homodimer.

It is found in the cytoplasm. It carries out the reaction D-glyceraldehyde 3-phosphate = dihydroxyacetone phosphate. The enzyme catalyses dihydroxyacetone phosphate = methylglyoxal + phosphate. Its pathway is carbohydrate biosynthesis; gluconeogenesis. It functions in the pathway carbohydrate degradation; glycolysis; D-glyceraldehyde 3-phosphate from glycerone phosphate: step 1/1. Its function is as follows. Triosephosphate isomerase is an extremely efficient metabolic enzyme that catalyzes the interconversion between dihydroxyacetone phosphate (DHAP) and D-glyceraldehyde-3-phosphate (G3P) in glycolysis and gluconeogenesis. Functionally, it is also responsible for the non-negligible production of methylglyoxal a reactive cytotoxic side-product that modifies and can alter proteins, DNA and lipids. The protein is Triosephosphate isomerase of Mesocricetus auratus (Golden hamster).